The primary structure comprises 241 residues: Large ribosomal subunit protein uL13c (241 aa).

The transit peptide at 1–50 (MAVLCSSSTVILSSSSVKSSGSERKSPFLGFSLTAISKPSVRVGIYANSK) directs the protein to the chloroplast.

This sequence belongs to the universal ribosomal protein uL13 family. Part of the 50S ribosomal subunit.

The protein resides in the plastid. The protein localises to the chloroplast. The polypeptide is Large ribosomal subunit protein uL13c (RPL13) (Arabidopsis thaliana (Mouse-ear cress)).